Reading from the N-terminus, the 1994-residue chain is Protein-methionine sulfoxide oxidase mical3a (1994 aa).

The interval 2 to 498 is monooxygenase domain; that stretch reads GDGGVNAVGE…RHLLDTGETR (497 aa). FAD contacts are provided by residues cysteine 101, 101 to 129, glutamate 120, arginine 122, arginine 127, asparagine 129, and aspartate 402; that span reads CGLRTAIELGFLGAKVVLLEKRDAFSRNN. One can recognise a Calponin-homology (CH) domain in the interval 521–627; it reads IVRSSKLLNW…YLSQFYEMFK (107 aa). A disordered region spans residues 666–708; that stretch reads ISRKRNPKDKKEKELDGLGKRRKTSQAGQSEDEELQRANRDDR. The segment covering 674-684 has biased composition (basic and acidic residues); the sequence is DKKEKELDGLG. The LIM zinc-binding domain maps to 772 to 834; sequence DVCFFCRKRV…KPHYCYRLSG (63 aa). 6 disordered regions span residues 843–900, 917–1064, 1176–1263, 1281–1476, 1493–1555, and 1598–1747; these read PAAA…LKGT, EELE…AEAR, SQPV…ELKK, LGLT…REEV, VEDT…SPEA, and KVAW…LRLR. Composition is skewed to acidic residues over residues 917 to 926 and 951 to 961; these read EELEEVPEET and SDMEEEDEDAE. Positions 975–987 are enriched in basic and acidic residues; it reads EAVELHAKLKGES. Acidic residues-rich tracts occupy residues 1001 to 1037 and 1046 to 1060; these read GEMDEDEEEEEDEEDEDEEEEEESSEEPCEEDDDPEA and PGTEIDQEDIPSDAE. The segment covering 1200–1215 has biased composition (polar residues); sequence PTGNPLSPICTQSQPC. Basic and acidic residues-rich tracts occupy residues 1249–1263 and 1287–1297; these read RTNEHLKDSTPELKK and ERSKTAVEKSI. 2 stretches are compositionally biased toward low complexity: residues 1299–1314 and 1358–1368; these read KTPTPESSSPKSYTPE and SSSSGLGLNGS. Polar residues predominate over residues 1369-1389; the sequence is VTTSQTAASDSYNNSDSTMLT. Pro residues predominate over residues 1437–1458; sequence PVSPPQPKQKPVTAPVPTPRTN. Residues 1464-1476 show a composition bias toward basic and acidic residues; sequence RVKEPNKPRREEV. Over residues 1616 to 1635 the composition is skewed to basic and acidic residues; that stretch reads AQKDSAVKALESKKQADTLP. Residues 1649-1660 are compositionally biased toward low complexity; sequence SSVTSSESSTGG. Over residues 1661–1679 the composition is skewed to basic residues; sequence KSKKRSSLFSPRKNKKEKK. The segment covering 1680 to 1693 has biased composition (basic and acidic residues); the sequence is AKNERLSSTEETPP. Positions 1718–1729 are enriched in low complexity; that stretch reads CPSTPSSSTTGD. The span at 1730–1746 shows a compositional bias: basic and acidic residues; the sequence is SGKKKDSPLDRSSDLRL. Coiled-coil stretches lie at residues 1796-1855 and 1894-1960; these read EEEL…KALR and QEKN…EQRD. In terms of domain architecture, bMERB spans 1816-1982; the sequence is KQEELKRLHR…EKEEDKDLEA (167 aa).

It belongs to the Mical family. It depends on FAD as a cofactor.

It localises to the cytoplasm. It is found in the cytoskeleton. The protein resides in the nucleus. It carries out the reaction L-methionyl-[F-actin] + NADPH + O2 + H(+) = L-methionyl-(R)-S-oxide-[F-actin] + NADP(+) + H2O. Its function is as follows. Monooxygenase that promotes depolymerization of F-actin by mediating oxidation of specific methionine residues on actin. Acts by modifying actin subunits through the addition of oxygen to form methionine-sulfoxide, leading to promote actin filament severing and prevent repolymerization. Involved in exocytic vesicles tethering and fusion: the monooxygenase activity is required for this process. This Danio rerio (Zebrafish) protein is Protein-methionine sulfoxide oxidase mical3a (mical3a).